Consider the following 259-residue polypeptide: MTFPNINPIIFYLGPLAISWYSLSYVVGILLSWFYANKIIEKFKPQINKKTLEDFITYAVIGIIVGGRLGFVLLYNPSRYFLHPIDILKTYEGGMSFHGGALGVIIAAYLFCRKYKVNFLSLTDIIAAVVPIGLFLGRIANFINGELYGRITNASFGMIFPNSDLMPRHPSQLYEAFFEGLVLFCILAYATFKNKTLKNCGLNSGLFLTFYALFRIAIEIFREPDIQIGFILDNLTMGQILSVPMLILGSYLICQSNPK.

4 consecutive transmembrane segments (helical) span residues 9 to 29, 55 to 75, 92 to 112, and 117 to 137; these read IIFY…VVGI, FITY…VLLY, EGGM…YLFC, and VNFL…LFLG. Arginine 138 is an a 1,2-diacyl-sn-glycero-3-phospho-(1'-sn-glycerol) binding site. A run of 3 helical transmembrane segments spans residues 172–192, 201–221, and 228–248; these read QLYE…YATF, GLNS…IEIF, and IGFI…MLIL.

This sequence belongs to the Lgt family.

It is found in the cell inner membrane. The enzyme catalyses L-cysteinyl-[prolipoprotein] + a 1,2-diacyl-sn-glycero-3-phospho-(1'-sn-glycerol) = an S-1,2-diacyl-sn-glyceryl-L-cysteinyl-[prolipoprotein] + sn-glycerol 1-phosphate + H(+). It functions in the pathway protein modification; lipoprotein biosynthesis (diacylglyceryl transfer). In terms of biological role, catalyzes the transfer of the diacylglyceryl group from phosphatidylglycerol to the sulfhydryl group of the N-terminal cysteine of a prolipoprotein, the first step in the formation of mature lipoproteins. This chain is Phosphatidylglycerol--prolipoprotein diacylglyceryl transferase, found in Rickettsia akari (strain Hartford).